The following is a 643-amino-acid chain: 3D-(3,5/4)-trihydroxycyclohexane-1,2-dione hydrolase (643 aa).

Residue Glu-65 coordinates thiamine diphosphate. Residues 441 to 521 form a thiamine pyrophosphate binding region; it reads SLPGDLQRMW…VNVLLFDNCG (81 aa). The Mg(2+) site is built by Asp-492 and Asn-519.

Belongs to the TPP enzyme family. The cofactor is Mg(2+). Thiamine diphosphate serves as cofactor.

It carries out the reaction 3D-3,5/4-trihydroxycyclohexane-1,2-dione + H2O = 5-deoxy-D-glucuronate + H(+). The protein operates within polyol metabolism; myo-inositol degradation into acetyl-CoA; acetyl-CoA from myo-inositol: step 3/7. Involved in the cleavage of the C1-C2 bond of 3D-(3,5/4)-trihydroxycyclohexane-1,2-dione (THcHDO) to yield 5-deoxy-glucuronate (5DG). This is 3D-(3,5/4)-trihydroxycyclohexane-1,2-dione hydrolase from Clostridium botulinum (strain Alaska E43 / Type E3).